A 357-amino-acid polypeptide reads, in one-letter code: Beta-hexosaminidase (357 aa).

Substrate-binding positions include D66, R74, R140, and 170-171; that span reads KH. The active-site Proton donor/acceptor is H183. Residue D254 is the Nucleophile of the active site.

Belongs to the glycosyl hydrolase 3 family. NagZ subfamily.

The protein localises to the cytoplasm. The enzyme catalyses Hydrolysis of terminal non-reducing N-acetyl-D-hexosamine residues in N-acetyl-beta-D-hexosaminides.. It functions in the pathway cell wall biogenesis; peptidoglycan recycling. Its function is as follows. Plays a role in peptidoglycan recycling by cleaving the terminal beta-1,4-linked N-acetylglucosamine (GlcNAc) from peptide-linked peptidoglycan fragments, giving rise to free GlcNAc, anhydro-N-acetylmuramic acid and anhydro-N-acetylmuramic acid-linked peptides. The polypeptide is Beta-hexosaminidase (Chromobacterium violaceum (strain ATCC 12472 / DSM 30191 / JCM 1249 / CCUG 213 / NBRC 12614 / NCIMB 9131 / NCTC 9757 / MK)).